The sequence spans 199 residues: Secreted chorismate mutase (199 aa).

Residues 1 to 33 (MLTRPREIYLATAVSIGILLSLIAPLGPPLARA) form the signal peptide. One can recognise a Chorismate mutase domain in the interval 34 to 113 (DGTSQLAELV…ATEAIEYSRF (80 aa)). Residues Arg-49, Lys-60, Asp-69, 72 to 76 (RVEQQ), 105 to 109 (TEAIE), and Arg-134 contribute to the substrate site. An intrachain disulfide couples Cys-160 to Cys-193.

In terms of assembly, homodimer.

It is found in the secreted. The enzyme catalyses chorismate = prephenate. It participates in metabolic intermediate biosynthesis; prephenate biosynthesis; prephenate from chorismate: step 1/1. With respect to regulation, tyrosine, phenylalanine, and tryptophan moderately enhance chorismate mutase activity at low concentrations, but allosterically inhibit the enzyme at higher concentrations. Functionally, catalyzes the Claisen rearrangement of chorismate to prephenate. May play some role in the pathogenicity. This is Secreted chorismate mutase from Mycobacterium tuberculosis (strain ATCC 25618 / H37Rv).